We begin with the raw amino-acid sequence, 119 residues long: Fluoride-specific ion channel FluC 2 (119 aa).

The next 2 helical transmembrane spans lie at 1–21 and 44–64; these read MIFA…ALTS and GAFF…YAFL. Na(+) is bound by residues glycine 70 and threonine 73. Residues 98 to 118 form a helical membrane-spanning segment; it reads LLASYLGGAVLLTCGYYLGSL.

This sequence belongs to the fluoride channel Fluc/FEX (TC 1.A.43) family.

The protein resides in the cell membrane. The catalysed reaction is fluoride(in) = fluoride(out). With respect to regulation, na(+) is not transported, but it plays an essential structural role and its presence is essential for fluoride channel function. Functionally, fluoride-specific ion channel. Important for reducing fluoride concentration in the cell, thus reducing its toxicity. This is Fluoride-specific ion channel FluC 2 from Lactobacillus delbrueckii subsp. bulgaricus (strain ATCC 11842 / DSM 20081 / BCRC 10696 / JCM 1002 / NBRC 13953 / NCIMB 11778 / NCTC 12712 / WDCM 00102 / Lb 14).